Here is a 178-residue protein sequence, read N- to C-terminus: Ribosome maturation factor RimP (178 aa).

It belongs to the RimP family.

The protein resides in the cytoplasm. Required for maturation of 30S ribosomal subunits. In Streptococcus pyogenes serotype M4 (strain MGAS10750), this protein is Ribosome maturation factor RimP.